The sequence spans 93 residues: Small integral membrane protein 41 (93 aa).

A helical membrane pass occupies residues 38 to 58; it reads VVLGVLSLLVLCGVLFLGGGL. Basic and acidic residues predominate over residues 71 to 80; sequence REQRASREPE. The segment at 71 to 93 is disordered; the sequence is REQRASREPEPGSASGEDGDDDS.

It localises to the membrane. This is Small integral membrane protein 41 from Homo sapiens (Human).